The following is a 1121-amino-acid chain: Peroxisomal ATPase PEX1 (1121 aa).

2 disordered regions span residues 187–221 (SISSVRSDSSGHRIRRVRSSTSTATGRRSVTNNGE) and 1099–1121 (SGRDGNMPDGTASNEIGARSTLM). Positions 205 to 217 (SSTSTATGRRSVT) are enriched in low complexity.

The protein belongs to the AAA ATPase family. As to quaternary structure, interacts with PEX6; forming the PEX1-PEX6 AAA ATPase complex, which is composed of a heterohexamer formed by a trimer of PEX1-PEX6 dimers.

The protein resides in the membrane. The enzyme catalyses ATP + H2O = ADP + phosphate + H(+). Functionally, component of the PEX1-PEX6 AAA ATPase complex involved in peroxisome biosynthesis. The complex acts as a protein dislocase complex that mediates the ATP-dependent extraction of the PEX5 receptor from peroxisomal membranes, an essential step for PEX5 recycling. Specifically recognizes PEX5 monoubiquitinated at 'Cys-6', and pulls it out of the peroxisome lumen through the PEX2-PEX10-PEX12 retrotranslocation channel. Extraction by the PEX1-PEX6 AAA ATPase complex is accompanied by unfolding of the TPR repeats and release of bound cargo from PEX5. The polypeptide is Peroxisomal ATPase PEX1 (Komagataella phaffii (strain GS115 / ATCC 20864) (Yeast)).